The primary structure comprises 252 residues: 5'-nucleotidase SurE (252 aa).

4 residues coordinate a divalent metal cation: aspartate 8, aspartate 9, serine 42, and asparagine 94.

Belongs to the SurE nucleotidase family. A divalent metal cation serves as cofactor.

The protein resides in the cytoplasm. It catalyses the reaction a ribonucleoside 5'-phosphate + H2O = a ribonucleoside + phosphate. Its function is as follows. Nucleotidase that shows phosphatase activity on nucleoside 5'-monophosphates. The sequence is that of 5'-nucleotidase SurE from Ehrlichia ruminantium (strain Welgevonden).